The sequence spans 354 residues: RNA 3'-terminal phosphate cyclase (354 aa).

ATP contacts are provided by residues Q100 and 290 to 293; that span reads HMGD. The active-site Tele-AMP-histidine intermediate is the H316.

This sequence belongs to the RNA 3'-terminal cyclase family. Type 1 subfamily.

The protein localises to the cytoplasm. The enzyme catalyses a 3'-end 3'-phospho-ribonucleotide-RNA + ATP = a 3'-end 2',3'-cyclophospho-ribonucleotide-RNA + AMP + diphosphate. Functionally, catalyzes the conversion of 3'-phosphate to a 2',3'-cyclic phosphodiester at the end of RNA. The mechanism of action of the enzyme occurs in 3 steps: (A) adenylation of the enzyme by ATP; (B) transfer of adenylate to an RNA-N3'P to produce RNA-N3'PP5'A; (C) and attack of the adjacent 2'-hydroxyl on the 3'-phosphorus in the diester linkage to produce the cyclic end product. The biological role of this enzyme is unknown but it is likely to function in some aspects of cellular RNA processing. The sequence is that of RNA 3'-terminal phosphate cyclase from Caldivirga maquilingensis (strain ATCC 700844 / DSM 13496 / JCM 10307 / IC-167).